The following is a 306-amino-acid chain: SDS degradation transcriptional activation protein (306 aa).

The region spanning methionine 1–threonine 59 is the HTH lysR-type domain. Positions phenylalanine 19–glutamine 38 form a DNA-binding region, H-T-H motif.

The protein belongs to the LysR transcriptional regulatory family.

In terms of biological role, activates the transcription of the sdsA gene for sodium dodecyl sulfate (SDS) degradation. The chain is SDS degradation transcriptional activation protein (sdsB) from Pseudomonas sp. (strain ATCC 19151).